Reading from the N-terminus, the 148-residue chain is Large ribosomal subunit protein uL22 (148 aa).

The protein belongs to the universal ribosomal protein uL22 family. In terms of assembly, part of the 50S ribosomal subunit.

In terms of biological role, this protein binds specifically to 23S rRNA. It makes multiple contacts with different domains of the 23S rRNA in the assembled 50S subunit and ribosome. Its function is as follows. The globular domain of the protein is located near the polypeptide exit tunnel on the outside of the subunit, while an extended beta-hairpin is found that lines the wall of the exit tunnel in the center of the 70S ribosome. In Thermoplasma volcanium (strain ATCC 51530 / DSM 4299 / JCM 9571 / NBRC 15438 / GSS1), this protein is Large ribosomal subunit protein uL22.